Reading from the N-terminus, the 346-residue chain is Oxidoreductase calI (346 aa).

Positions 11-33 (VSTPQGRGDGRPTADQVLRDQDP) are disordered. Positions 18–32 (GDGRPTADQVLRDQD) are enriched in basic and acidic residues. NADP(+) contacts are provided by Leu-52, Lys-76, Asp-100, and Asn-128. Ser-181 acts as the Proton donor in catalysis. The NADP(+) site is built by Tyr-208, Lys-212, and Ile-241. Catalysis depends on Tyr-208, which acts as the Proton acceptor. The active-site Lowers pKa of active site Tyr is the Lys-212.

Belongs to the short-chain dehydrogenases/reductases (SDR) family.

It participates in secondary metabolite biosynthesis. Its function is as follows. Oxidoreductase; part of the gene cluster that mediates the biosynthesis of calbistrin A and related compounds. Calbistrin A is a secondary metabolite with an interesting structure that was recently found to have bioactivity against leukemia cells. It consists of two polyketides linked by an ester bond: a bicyclic decalin containing polyketide and a linear 12 carbon dioic acid structure. The polyketide synthase calA is probably responsible for forming the decalin moiety. Because calA lacks a designated enoylreductase (ER) domain, the required activity is provided by the trans-enoyl reductase calK. Following release from the PKS, calF then probably catalyzes the oxidation and the subsequent Diels Alder cycloisomerization that lead to the formation of the decalin moiety. The decalin polyketide backbone includes two C-methyl groups, at C7 and C11 in backbone, of which the C7 position is probably methylated by the methyltransferase domain of calA. A candidate for adding the methyl group at C11, if not done by CalA, is the cluster methyltransferase calH. Several additional tailoring enzymes within the cluster could be involved in the modification of the decalin polyketide product. Those include the 3 cytochrome P450 monooxygenases CalE, CalG and CalL, of which one might be responsible for the introduction of the extra hydroxyl group attached to the backbone of the decalin moiety, at position C9 in the backbone, that allows for attachment of the linear moiety. One tailoring enzyme activity that is expected to be involved in biosynthesis of calbistrin is an acyltransferase for connecting the two polyketide synthase products, and which could be performed by the cluster acyltransferase calJ. The enzyme responsible for the biosynthesis of the linear moiety, probably a second PKS, has not been identified yet. The chain is Oxidoreductase calI from Penicillium decumbens.